The primary structure comprises 357 residues: mRNA endoribonuclease toxin LS (357 aa).

As to quaternary structure, forms homodimer in solution. Forms a complex with cognate antitoxin RnlB and with enterobacteria phage T4 antitoxin Dmd.

The protein localises to the cytoplasm. Its function is as follows. Toxic component of a type II toxin-antitoxin (TA) system. A stable (half-life 27.6 minutes) endoribonuclease that in the absence of cognate antitoxin RnlB causes generalized RNA degradation. Degrades late enterobacteria phage T4 mRNAs, protecting the host against T4 reproduction. Activity is inhibited by cognate antitoxin RnlB and by enterobacteria phage T4 protein Dmd. Targets cyaA mRNA. The protein is mRNA endoribonuclease toxin LS (rnlA) of Escherichia coli (strain K12).